The sequence spans 350 residues: Small ribosomal subunit biogenesis GTPase RsgA (350 aa).

Positions 1–17 (MSKNKLSKGQQRRVNAN) are enriched in polar residues. The disordered stretch occupies residues 1 to 33 (MSKNKLSKGQQRRVNANHQRRLKTSKEKPDYDD). Positions 104 to 273 (TSVLTRPDFY…VIDSPGVREF (170 aa)) constitute a CP-type G domain. Residues 160-163 (NKID) and 214-222 (GQSGVGKSS) contribute to the GTP site. Zn(2+)-binding residues include C297, C302, H304, and C310.

This sequence belongs to the TRAFAC class YlqF/YawG GTPase family. RsgA subfamily. As to quaternary structure, monomer. Associates with 30S ribosomal subunit, binds 16S rRNA. The cofactor is Zn(2+).

Its subcellular location is the cytoplasm. Functionally, one of several proteins that assist in the late maturation steps of the functional core of the 30S ribosomal subunit. Helps release RbfA from mature subunits. May play a role in the assembly of ribosomal proteins into the subunit. Circularly permuted GTPase that catalyzes slow GTP hydrolysis, GTPase activity is stimulated by the 30S ribosomal subunit. The polypeptide is Small ribosomal subunit biogenesis GTPase RsgA (Escherichia coli O6:H1 (strain CFT073 / ATCC 700928 / UPEC)).